A 182-amino-acid polypeptide reads, in one-letter code: MPVAALIREEIEIPENVNVEINGNTVAVKSGAKELRRDLMYPGIEISTEDGKVVIECTFPRKVQTAIVGTYRSHIQNMITGVTDGFEYKLVIRYAHFPMKVSAKGNTVTIDNFLGEKYTRTAKIMDGVTVKVSGEEVIVSGANKEFVGQTAANIEQATKVKGRDTRIFQDGIYIVEKAGKVL.

The protein belongs to the universal ribosomal protein uL6 family. In terms of assembly, part of the 50S ribosomal subunit.

Functionally, this protein binds to the 23S rRNA, and is important in its secondary structure. It is located near the subunit interface in the base of the L7/L12 stalk, and near the tRNA binding site of the peptidyltransferase center. This is Large ribosomal subunit protein uL6 from Methanococcus maripaludis (strain C5 / ATCC BAA-1333).